We begin with the raw amino-acid sequence, 200 residues long: Imidazoleglycerol-phosphate dehydratase (200 aa).

Belongs to the imidazoleglycerol-phosphate dehydratase family.

The protein localises to the cytoplasm. The enzyme catalyses D-erythro-1-(imidazol-4-yl)glycerol 3-phosphate = 3-(imidazol-4-yl)-2-oxopropyl phosphate + H2O. It functions in the pathway amino-acid biosynthesis; L-histidine biosynthesis; L-histidine from 5-phospho-alpha-D-ribose 1-diphosphate: step 6/9. The protein is Imidazoleglycerol-phosphate dehydratase of Bifidobacterium animalis subsp. lactis (strain AD011).